Consider the following 160-residue polypeptide: Large ribosomal subunit protein eL29 (160 aa).

A compositionally biased stretch (basic residues) spans 1–26 (MAKSKNHTTHNQSRKWHRNGIKKPRS). Disordered stretches follow at residues 1–34 (MAKS…SLKG) and 115–160 (RLCQ…VKAP). Residue Lys-5 is modified to N6-methyllysine. Ser-31 is subject to Phosphoserine. Lys-33 is modified (N6-acetyllysine). The span at 126–160 (KAGAKAPAKAQASAPAQAPKGAQAPKGAQAPVKAP) shows a compositional bias: low complexity. Repeat copies occupy residues 127–134 (AGAKAPAK) and 135–142 (AQASAPAQ). The interval 127–142 (AGAKAPAKAQASAPAQ) is 2 X 8 AA tandem repeats of A-X-A-K-A-P-A-[KQ]. Ser-138 carries the post-translational modification Phosphoserine. Lys-145 bears the N6-acetyllysine mark.

The protein belongs to the eukaryotic ribosomal protein eL29 family. In terms of assembly, component of the large ribosomal subunit.

Its subcellular location is the cytoplasm. Functionally, component of the large ribosomal subunit. The ribosome is a large ribonucleoprotein complex responsible for the synthesis of proteins in the cell. In Mus musculus (Mouse), this protein is Large ribosomal subunit protein eL29 (Rpl29).